The chain runs to 469 residues: Neuraminidase (469 aa).

Residues 1–9 (MNPNQKIIT) are Intravirion-facing. A helical membrane pass occupies residues 10–30 (IGSVSLTIATICFLMQIAILV). The interval 11–33 (GSVSLTIATICFLMQIAILVTTV) is involved in apical transport and lipid raft association. The Virion surface segment spans residues 31 to 469 (TTVTLHFKQY…DGADINLMPI (439 aa)). Residues 36 to 88 (HFKQYECSSPPNNQVMPCEPIIIERNITEIVYLTNTTIEKEICPKLVEYRNWS) are hypervariable stalk region. Asparagine 61, asparagine 70, and asparagine 86 each carry an N-linked (GlcNAc...) asparagine; by host glycan. The head of neuraminidase stretch occupies residues 91 to 469 (QCKITGFAPF…DGADINLMPI (379 aa)). Cystine bridges form between cysteine 92–cysteine 417, cysteine 124–cysteine 129, cysteine 183–cysteine 230, cysteine 232–cysteine 237, cysteine 278–cysteine 291, cysteine 280–cysteine 289, cysteine 318–cysteine 337, and cysteine 421–cysteine 447. Position 118 (arginine 118) interacts with substrate. Asparagine 146 is a glycosylation site (N-linked (GlcNAc...) asparagine; by host). Aspartate 151 serves as the catalytic Proton donor/acceptor. A substrate-binding site is contributed by arginine 152. N-linked (GlcNAc...) asparagine; by host glycosylation is found at asparagine 200 and asparagine 234. Position 276–277 (276–277 (EE)) interacts with substrate. Substrate is bound at residue arginine 292. Positions 293, 297, and 324 each coordinate Ca(2+). Arginine 371 is a substrate binding site. Asparagine 402 is a glycosylation site (N-linked (GlcNAc...) asparagine; by host). Residue tyrosine 406 is the Nucleophile of the active site.

It belongs to the glycosyl hydrolase 34 family. In terms of assembly, homotetramer. The cofactor is Ca(2+). In terms of processing, N-glycosylated.

It localises to the virion membrane. The protein resides in the host apical cell membrane. The enzyme catalyses Hydrolysis of alpha-(2-&gt;3)-, alpha-(2-&gt;6)-, alpha-(2-&gt;8)- glycosidic linkages of terminal sialic acid residues in oligosaccharides, glycoproteins, glycolipids, colominic acid and synthetic substrates.. Inhibited by the neuraminidase inhibitors zanamivir (Relenza) and oseltamivir (Tamiflu). These drugs interfere with the release of progeny virus from infected cells and are effective against all influenza strains. Resistance to neuraminidase inhibitors is quite rare. In terms of biological role, catalyzes the removal of terminal sialic acid residues from viral and cellular glycoconjugates. Cleaves off the terminal sialic acids on the glycosylated HA during virus budding to facilitate virus release. Additionally helps virus spread through the circulation by further removing sialic acids from the cell surface. These cleavages prevent self-aggregation and ensure the efficient spread of the progeny virus from cell to cell. Otherwise, infection would be limited to one round of replication. Described as a receptor-destroying enzyme because it cleaves a terminal sialic acid from the cellular receptors. May facilitate viral invasion of the upper airways by cleaving the sialic acid moieties on the mucin of the airway epithelial cells. Likely to plays a role in the budding process through its association with lipid rafts during intracellular transport. May additionally display a raft-association independent effect on budding. Plays a role in the determination of host range restriction on replication and virulence. Sialidase activity in late endosome/lysosome traffic seems to enhance virus replication. This Influenza A virus (strain A/Hong Kong/5/1983 H3N2) protein is Neuraminidase.